Reading from the N-terminus, the 362-residue chain is MKESVQRKLESLTERFEEVQALVSQPEIIADQDKYRALTKEYSQLEGVVKCFADYQGAQGDFESAQEMMQESDPEMREMAQEEYKSSKQAIEQYEDELQILLLPKDPNDESNCFIEIRAGAGGDEAAIFAGDLFRMYSRYAEARRWKVEVVTMNEGDHGGYKEVIANIIGDGAYGVLKFESGGHRVQRVPETESQGRIHTSACTVVVMPEVPESEAIEVNKADLKIDTFRASGAGGQHVNKTDSAIRITHVPSGIVVECQDERSQHKNRAKAMAVLQSRLNKLEEEKRQAEETSTRRNLVASGDRSERIRTYNFPQGRVTDHRINLTLYRLDDVVAGDLDAVLEPIRQEHQADLLASLSDEG.

An N5-methylglutamine modification is found at Gln237. Over residues 284 to 295 (EEEKRQAEETST) the composition is skewed to basic and acidic residues. The disordered stretch occupies residues 284–304 (EEEKRQAEETSTRRNLVASGD).

Belongs to the prokaryotic/mitochondrial release factor family. In terms of processing, methylated by PrmC. Methylation increases the termination efficiency of RF1.

It is found in the cytoplasm. Peptide chain release factor 1 directs the termination of translation in response to the peptide chain termination codons UAG and UAA. In Pseudoalteromonas atlantica (strain T6c / ATCC BAA-1087), this protein is Peptide chain release factor 1.